The sequence spans 365 residues: Holliday junction branch migration complex subunit RuvB (365 aa).

The large ATPase domain (RuvB-L) stretch occupies residues 1 to 191 (MNFDPIDDFD…FGFTAHMDFY (191 aa)). Residues Leu30, Arg31, Gly72, Lys75, Thr76, Ser77, 138–140 (EDF), Arg181, Tyr191, and Arg228 contribute to the ATP site. Thr76 is a binding site for Mg(2+). Residues 192–262 (EPEELQQILM…VAQAALAVYD (71 aa)) are small ATPAse domain (RuvB-S). Positions 265–365 (QLGLDRLDRS…QATLFDPNGE (101 aa)) are head domain (RuvB-H). DNA is bound by residues Arg320 and Arg325.

This sequence belongs to the RuvB family. As to quaternary structure, homohexamer. Forms an RuvA(8)-RuvB(12)-Holliday junction (HJ) complex. HJ DNA is sandwiched between 2 RuvA tetramers; dsDNA enters through RuvA and exits via RuvB. An RuvB hexamer assembles on each DNA strand where it exits the tetramer. Each RuvB hexamer is contacted by two RuvA subunits (via domain III) on 2 adjacent RuvB subunits; this complex drives branch migration. In the full resolvosome a probable DNA-RuvA(4)-RuvB(12)-RuvC(2) complex forms which resolves the HJ.

Its subcellular location is the cytoplasm. The enzyme catalyses ATP + H2O = ADP + phosphate + H(+). In terms of biological role, the RuvA-RuvB-RuvC complex processes Holliday junction (HJ) DNA during genetic recombination and DNA repair, while the RuvA-RuvB complex plays an important role in the rescue of blocked DNA replication forks via replication fork reversal (RFR). RuvA specifically binds to HJ cruciform DNA, conferring on it an open structure. The RuvB hexamer acts as an ATP-dependent pump, pulling dsDNA into and through the RuvAB complex. RuvB forms 2 homohexamers on either side of HJ DNA bound by 1 or 2 RuvA tetramers; 4 subunits per hexamer contact DNA at a time. Coordinated motions by a converter formed by DNA-disengaged RuvB subunits stimulates ATP hydrolysis and nucleotide exchange. Immobilization of the converter enables RuvB to convert the ATP-contained energy into a lever motion, pulling 2 nucleotides of DNA out of the RuvA tetramer per ATP hydrolyzed, thus driving DNA branch migration. The RuvB motors rotate together with the DNA substrate, which together with the progressing nucleotide cycle form the mechanistic basis for DNA recombination by continuous HJ branch migration. Branch migration allows RuvC to scan DNA until it finds its consensus sequence, where it cleaves and resolves cruciform DNA. The polypeptide is Holliday junction branch migration complex subunit RuvB (Rhodococcus erythropolis (strain PR4 / NBRC 100887)).